Here is a 122-residue protein sequence, read N- to C-terminus: Large ribosomal subunit protein uL14 (122 aa).

This sequence belongs to the universal ribosomal protein uL14 family. As to quaternary structure, part of the 50S ribosomal subunit. Forms a cluster with proteins L3 and L19. In the 70S ribosome, L14 and L19 interact and together make contacts with the 16S rRNA in bridges B5 and B8.

In terms of biological role, binds to 23S rRNA. Forms part of two intersubunit bridges in the 70S ribosome. In Xylella fastidiosa (strain M23), this protein is Large ribosomal subunit protein uL14.